A 433-amino-acid polypeptide reads, in one-letter code: L-lysine 2,3-aminomutase (433 aa).

Residues 122 to 334 form the Radical SAM core domain; sequence HRYPDRVLFY…SLIGHTTGFA (213 aa). Residues cysteine 136, cysteine 140, and cysteine 143 each coordinate [4Fe-4S] cluster. Cysteine 279 is a binding site for Zn(2+). Position 348 is an N6-(pyridoxal phosphate)lysine (lysine 348). The Zn(2+) site is built by cysteine 389, cysteine 392, and cysteine 396.

It belongs to the radical SAM superfamily. KamA family. The cofactor is [4Fe-4S] cluster. Requires pyridoxal 5'-phosphate as cofactor. Zn(2+) serves as cofactor.

The enzyme catalyses L-lysine = (3S)-3,6-diaminohexanoate. In terms of biological role, catalyzes the interconversion of L-alpha-lysine and L-beta-lysine. Is involved in the biosynthesis pathway of N6-acetyl-beta-lysine, a compatible solute produced by methanogenic archaea that helps cells to cope with salt stress. This Methanococcus maripaludis (strain DSM 14266 / JCM 13030 / NBRC 101832 / S2 / LL) protein is L-lysine 2,3-aminomutase (ablA).